Here is a 392-residue protein sequence, read N- to C-terminus: Phosphoglycerate kinase (392 aa).

Substrate contacts are provided by residues 21-23 (DLN), R36, 59-62 (HLGR), R113, and R146. Residues K197, E319, and 345-348 (GGDT) each bind ATP.

It belongs to the phosphoglycerate kinase family. Monomer.

The protein localises to the cytoplasm. The enzyme catalyses (2R)-3-phosphoglycerate + ATP = (2R)-3-phospho-glyceroyl phosphate + ADP. It functions in the pathway carbohydrate degradation; glycolysis; pyruvate from D-glyceraldehyde 3-phosphate: step 2/5. This Nitrosococcus oceani (strain ATCC 19707 / BCRC 17464 / JCM 30415 / NCIMB 11848 / C-107) protein is Phosphoglycerate kinase.